Consider the following 38-residue polypeptide: Mu/omega-theraphotoxin-Mb1a (38 aa).

Cystine bridges form between Cys-7–Cys-21, Cys-14–Cys-26, and Cys-20–Cys-33. At Thr-38 the chain carries Threonine amide.

The protein belongs to the neurotoxin 10 (Hwtx-1) family. 28 (Jztx-11) subfamily. Expressed by the venom gland.

The protein resides in the secreted. In terms of biological role, paralytic toxin that inhibits insect voltage-gated sodium (Nav) and calcium (Cav) channels in P.americana (American cockroach) dorsal unpaired median (DUM) neurons, and inhibits the B.germanica (German cockroach) Nav channel (BgNaV1). Also shows a delay in fast inactivation when tested on BgNaV1. May act as a gating-modifier toxin on Nav and as a pore blocker on Cav. In vivo, reversibly paralyzes both L.cuprina (Australian sheep blowfly) and M.domestica (housefly), but does not affect larvae of H.armigera (cotton bollworms). The sequence is that of Mu/omega-theraphotoxin-Mb1a from Monocentropus balfouri (Socotra Island blue baboon tarantula).